The sequence spans 861 residues: Leucine--tRNA ligase (861 aa).

The 'HIGH' region signature appears at proline 43–histidine 53. A 'KMSKS' region motif is present at residues lysine 588–serine 592. An ATP-binding site is contributed by lysine 591.

It belongs to the class-I aminoacyl-tRNA synthetase family.

Its subcellular location is the cytoplasm. The enzyme catalyses tRNA(Leu) + L-leucine + ATP = L-leucyl-tRNA(Leu) + AMP + diphosphate. In Symbiobacterium thermophilum (strain DSM 24528 / JCM 14929 / IAM 14863 / T), this protein is Leucine--tRNA ligase.